The following is a 174-amino-acid chain: Inosine/xanthosine triphosphatase (174 aa).

A Mg(2+)-binding site is contributed by D68. 68 to 69 lines the substrate pocket; that stretch reads DA.

It belongs to the YjjX NTPase family. In terms of assembly, homodimer. Mg(2+) is required as a cofactor. Mn(2+) serves as cofactor.

The catalysed reaction is XTP + H2O = XDP + phosphate + H(+). It carries out the reaction ITP + H2O = IDP + phosphate + H(+). In terms of biological role, phosphatase that hydrolyzes non-canonical purine nucleotides such as XTP and ITP to their respective diphosphate derivatives. Probably excludes non-canonical purines from DNA/RNA precursor pool, thus preventing their incorporation into DNA/RNA and avoiding chromosomal lesions. The sequence is that of Inosine/xanthosine triphosphatase from Photobacterium profundum (strain SS9).